We begin with the raw amino-acid sequence, 1063 residues long: MEPEELTIEWYEENGLEKPIHFRCDPTRIGMKLPSPSTFTVDSVLELVGGNRMIEVVQVEDQGSVKMTLEEFVEFYKTPRDQRKNLYNVLSLEYSLTPLEDLVNSPALVRQIDWVGNIWPDALRQRWISFNGREKKSYFPHHTFPKVQNYCLMSVANCYTDFHIDFSGTSVWYHVLKGRKVFWLIPPTATNFFIYQEFIKTVSDNAFFGRSVEACHVAVLEPGDTMLIPSGWIHAVYTPDDSLVFGGNFLHSLSCQTQLRVYQVENKLNITRKFRLPYNEELLFYVMADYVKKWTGREYVRPLLVEDAKLDYVGEKWKAAGGHLKKIRFEDYNVEVTSEMVKNEEESEKDEVKVIAMHAGSSNYDNAMISKMSYTEATGLEEEAEDEDVKPETKKEAEERRDAEIDLLAATNSLIFYRNSKHDFIRNKSVPDHKLPIGHEPPVYFNDEEVSRISPRLLEELEALGAYIRRKNRVEVAEGICHPASLINLFNTVLKKRRAELTGKPFQFNQIMPRRYTRAAIETGDYDFEPVRTIEDSRRASQFKVEDFPDELLESDEPDETSRIHLPHQPSSGPLEYIPTPRGEIRENSLGFEPEYDEDMEEYDPAEQVVKEELEEEEEEEEGEEEEEEEYVAPVTRRSSTRGSASTKEEPQEEKEEKEAAPKKEKKEKKVKKEKSSKPEKDTTEAKLKKEKKKKEMERRLRDSELEAELRAAHGGKNAKSKKKPEKPAYVGGLPTAPIQNDPVVSNPYNYDPRMEMMKLGTGQLKSAYRKTKANVELHIEKNLYKLEPKRDESESREPSMEHEDSPTTPHAPYDRYSHYHTENSHFQEDQDSHRTPAKRSKYDNISVDTSESPHIPKKRSLEGRPSPYSVISPPHNRPKLSSPAMFSPSSEPRRSNDRRTSDPAVNAMKKGVYMPPMSRQDKMIAEAASASSSRHSSFSERRPSFIPDLNSSRHSSTDTPMYTPTAPARSSWLPNTSNVTRHSLDDDSPIDVVSESPIDVLNSPPFPRSITPPPVSLSELKSQSNGRKSNYSEDGKRAKIPAREAVAELKTLIGKLKTLNEA.

The region spanning 86–266 (LYNVLSLEYS…TQLRVYQVEN (181 aa)) is the JmjC domain. Threonine 160 lines the substrate pocket. The Fe cation site is built by histidine 163 and aspartate 165. Lysine 180 is a substrate binding site. A Fe cation-binding site is contributed by histidine 234. Residues 379-389 (GLEEEAEDEDV) show a composition bias toward acidic residues. 3 disordered regions span residues 379–400 (GLEEEAEDEDVKPETKKEAEER), 554–750 (ESDE…NPYN), and 776–1040 (VELH…KRAK). Over residues 390-400 (KPETKKEAEER) the composition is skewed to basic and acidic residues. 2 stretches are compositionally biased toward acidic residues: residues 594–605 (PEYDEDMEEYDP) and 613–631 (ELEEEEEEEEGEEEEEEEY). The segment covering 636-646 (TRRSSTRGSAS) has biased composition (low complexity). 5 stretches are compositionally biased toward basic and acidic residues: residues 647 to 665 (TKEEPQEEKEEKEAAPKKE), 674 to 712 (EKSSKPEKDTTEAKLKKEKKKKEMERRLRDSELEAELRA), 776 to 806 (VELHIEKNLYKLEPKRDESESREPSMEHEDS), 813 to 835 (PYDRYSHYHTENSHFQEDQDSHR), and 892 to 902 (EPRRSNDRRTS). Residues 926–937 (AEAASASSSRHS) show a composition bias toward low complexity. 2 stretches are compositionally biased toward polar residues: residues 950–963 (LNSSRHSSTDTPMY) and 973–982 (WLPNTSNVTR). The segment covering 1005-1016 (PPFPRSITPPPV) has biased composition (pro residues). A compositionally biased stretch (polar residues) spans 1020–1030 (ELKSQSNGRKS). Over residues 1031 to 1040 (NYSEDGKRAK) the composition is skewed to basic and acidic residues.

This sequence belongs to the JHDM1 histone demethylase family. The cofactor is Fe(2+).

Its subcellular location is the nucleus. It carries out the reaction N(6),N(6)-dimethyl-L-lysyl(36)-[histone H3] + 2 2-oxoglutarate + 2 O2 = L-lysyl(36)-[histone H3] + 2 formaldehyde + 2 succinate + 2 CO2. Functionally, histone demethylase that specifically demethylates 'Lys-36' of histone H3, thereby playing a central role in histone code. In Caenorhabditis briggsae, this protein is JmjC domain-containing histone demethylation protein 1 (jhdm-1).